Reading from the N-terminus, the 428-residue chain is Monocarboxylate transporter 13 (428 aa).

Residues 1–10 (MVHRTEPPDG) lie on the Cytoplasmic side of the membrane. 12 consecutive transmembrane segments (helical) span residues 11–31 (GWGWMVVLSAFFQSALVFGVL), 52–72 (VSWIASIGIAVQQFGSPIGSA), 81–101 (PVVMTGGILAALGMLLASFAT), 106–126 (LYLSIGLLSGSGWALTFTPTL), 139–159 (LAMGLALTGVGISSFAFAPLF), 172–192 (LLLVSALSLHLVACGALLRPL), 221–241 (VALTLINTGYFIPYVHLVAHL), 244–264 (LGWDPLPAAFLLSVAAISDLV), 283–303 (LLMLWTTLTGVSLALFPVAQA), 309–329 (VLAVAYGFTSGALTPVAFSVI), 338–358 (IYCGLGLVQMIESVGGLLGAP), and 374–394 (FVVAGAFLLAGSGVLITLPHF). At 395–428 (FSCISLSTSRPQDLVIEAPDTKIPLPKEEGLGEN) the chain is on the cytoplasmic side.

Belongs to the major facilitator superfamily. Monocarboxylate porter (TC 2.A.1.13) family.

It localises to the golgi apparatus membrane. The protein localises to the cell membrane. Proton-linked monocarboxylate transporter. May catalyze the transport of monocarboxylates across the plasma membrane. This is Monocarboxylate transporter 13 (Slc16a13) from Rattus norvegicus (Rat).